Consider the following 137-residue polypeptide: Large ribosomal subunit protein uL16 (137 aa).

Belongs to the universal ribosomal protein uL16 family. As to quaternary structure, part of the 50S ribosomal subunit.

Its function is as follows. Binds 23S rRNA and is also seen to make contacts with the A and possibly P site tRNAs. This is Large ribosomal subunit protein uL16 from Francisella tularensis subsp. holarctica (strain FTNF002-00 / FTA).